The following is an 87-amino-acid chain: Sec-independent protein translocase protein TatA (87 aa).

A helical transmembrane segment spans residues 1–21 (MGSFSITHWLILLVVVVVVFG). The segment at 56 to 87 (VLDHDAGTNPPNITGTQSDTTSANKVDDTHNV) is disordered. Polar residues predominate over residues 64–79 (NPPNITGTQSDTTSAN).

This sequence belongs to the TatA/E family. In terms of assembly, the Tat system comprises two distinct complexes: a TatABC complex, containing multiple copies of TatA, TatB and TatC subunits, and a separate TatA complex, containing only TatA subunits. Substrates initially bind to the TatABC complex, which probably triggers association of the separate TatA complex to form the active translocon.

It localises to the cell inner membrane. Its function is as follows. Part of the twin-arginine translocation (Tat) system that transports large folded proteins containing a characteristic twin-arginine motif in their signal peptide across membranes. TatA could form the protein-conducting channel of the Tat system. The sequence is that of Sec-independent protein translocase protein TatA from Psychrobacter arcticus (strain DSM 17307 / VKM B-2377 / 273-4).